A 332-amino-acid chain; its full sequence is Ribosomal RNA small subunit methyltransferase C (332 aa).

The protein belongs to the methyltransferase superfamily. RsmC family. Monomer.

The protein localises to the cytoplasm. The enzyme catalyses guanosine(1207) in 16S rRNA + S-adenosyl-L-methionine = N(2)-methylguanosine(1207) in 16S rRNA + S-adenosyl-L-homocysteine + H(+). Its function is as follows. Specifically methylates the guanine in position 1207 of 16S rRNA in the 30S particle. This is Ribosomal RNA small subunit methyltransferase C from Pseudomonas syringae pv. tomato (strain ATCC BAA-871 / DC3000).